The sequence spans 358 residues: 3-dehydroquinate synthase (358 aa).

NAD(+) is bound by residues 105–109 (GVVGD), 129–130 (TT), lysine 142, lysine 151, and 169–172 (TLKT). Zn(2+) contacts are provided by glutamate 184, histidine 245, and histidine 262.

It belongs to the sugar phosphate cyclases superfamily. Dehydroquinate synthase family. NAD(+) serves as cofactor. It depends on Co(2+) as a cofactor. Zn(2+) is required as a cofactor.

It localises to the cytoplasm. The enzyme catalyses 7-phospho-2-dehydro-3-deoxy-D-arabino-heptonate = 3-dehydroquinate + phosphate. It functions in the pathway metabolic intermediate biosynthesis; chorismate biosynthesis; chorismate from D-erythrose 4-phosphate and phosphoenolpyruvate: step 2/7. In terms of biological role, catalyzes the conversion of 3-deoxy-D-arabino-heptulosonate 7-phosphate (DAHP) to dehydroquinate (DHQ). The polypeptide is 3-dehydroquinate synthase (Enterococcus faecalis (strain ATCC 47077 / OG1RF)).